The following is a 451-amino-acid chain: PTS system cellobiose-specific EIIC component (451 aa).

Residues 8–423 (LEDRVMPVAG…FIAFAIYYPF (416 aa)) form the PTS EIIC type-3 domain. Helical transmembrane passes span 31–51 (GIIL…VGFL), 72–92 (LLYP…FGVA), 104–124 (LSAG…QVPF), 138–158 (GIPV…LAIV), 187–207 (FVAL…RLIL), 227–247 (LSVL…VQLL), 250–270 (TGLH…LSLM), 293–313 (FFDL…ALTM), 347–367 (IVMN…LVVV), and 407–427 (ILQI…FSIW).

It is found in the cell membrane. Its function is as follows. The phosphoenolpyruvate-dependent sugar phosphotransferase system (sugar PTS), a major carbohydrate active transport system, catalyzes the phosphorylation of incoming sugar substrates concomitantly with their translocation across the cell membrane. The enzyme II CelABD PTS system is involved in cellobiose transport. This Geobacillus stearothermophilus (Bacillus stearothermophilus) protein is PTS system cellobiose-specific EIIC component.